The following is a 358-amino-acid chain: Uroporphyrinogen decarboxylase (358 aa).

Substrate contacts are provided by residues 29–33 (RQAGR), F48, D79, Y155, S210, and H330.

It belongs to the uroporphyrinogen decarboxylase family. As to quaternary structure, homodimer.

The protein resides in the cytoplasm. It carries out the reaction uroporphyrinogen III + 4 H(+) = coproporphyrinogen III + 4 CO2. It functions in the pathway porphyrin-containing compound metabolism; protoporphyrin-IX biosynthesis; coproporphyrinogen-III from 5-aminolevulinate: step 4/4. Catalyzes the decarboxylation of four acetate groups of uroporphyrinogen-III to yield coproporphyrinogen-III. This Bordetella pertussis (strain Tohama I / ATCC BAA-589 / NCTC 13251) protein is Uroporphyrinogen decarboxylase.